Reading from the N-terminus, the 213-residue chain is IVGGSVTTIGQYPSMASLLFNNRQVCGGVIINNRSVLTAAHCPFGDAVSSWRFRVGSTNANSGGTVFTLSTIINHPSYNRWTLDNDISIMRAASNIGTSASVQPAGIAGSNYNLGDNQVVWATGWGATSAGGSLARFPGVNARHVQIWTVNQNTCASRYAAIGRTVTANMLCSGWLDVGGRDQCQGDSGGPLYHNRIVVAVVSRYTSWIQSNA.

The 213-residue stretch at 1-213 folds into the Peptidase S1 domain; that stretch reads IVGGSVTTIG…RYTSWIQSNA (213 aa). The cysteines at positions 26 and 42 are disulfide-linked. Residues histidine 41 and aspartate 86 each act as charge relay system in the active site. Cysteine 155 and cysteine 172 are joined by a disulfide. The active-site Charge relay system is serine 188.

The protein belongs to the peptidase S1 family. Hemolymph and saliva of the larval form (caterpillar).

Its subcellular location is the secreted. It is found in the extracellular space. Its activity is regulated as follows. Sensitive to serine proteinase inhibitors and thiol proteinase inhibitors. Fibrinolytic activity; shows preferential cleavage of Arg-Gly bonds in all three fibrinogen chains. Contact with the caterpillars causes severe bleeding, due the anticoagulant effect of the protein. The polypeptide is Achelase-1 (Lonomia achelous (Giant silkworm moth)).